A 137-amino-acid polypeptide reads, in one-letter code: Immunoglobulin domain-containing protein oig-1 (137 aa).

Positions 1 to 23 (MFSELRILRDILLLCFLSVGINA) are cleaved as a signal peptide. In terms of domain architecture, Ig-like C2-type spans 41 to 133 (PKISRSSYFK…KGSRVKKFLT (93 aa)). Cys63 and Cys118 are joined by a disulfide.

Expressed in DD and VD GABAergic motor neurons. Expressed in a subset of head neurons including M2 motor neurons in the pharynx. Expressed in coelomocytes.

The protein resides in the membrane. The protein localises to the secreted. It is found in the extracellular space. Its subcellular location is the cell projection. It localises to the dendrite. The protein resides in the axon. In terms of biological role, plays a role in neural development, where it temporally regulates synapse formation in the D-type inhibitory GABAergic motor neurons, dorsal D (DD) and ventral D (VD) motor neurons. Controls the translocation of postsynaptic proteins, such as the acetylcholine receptor subunit acr-12, and presynaptic proteins, such as snb-1, along nerve cords to prevent premature synapse remodeling/formation. The sequence is that of Immunoglobulin domain-containing protein oig-1 from Caenorhabditis elegans.